Reading from the N-terminus, the 217-residue chain is Octanoyltransferase (217 aa).

Residues 32–207 form the BPL/LPL catalytic domain; the sequence is SESPDELWIV…TFSQLLGYQH (176 aa). Residues 71–78, 138–140, and 151–153 contribute to the substrate site; these read RGGQVTYH, SLG, and GLA. Cys-169 (acyl-thioester intermediate) is an active-site residue.

It belongs to the LipB family.

It is found in the cytoplasm. The catalysed reaction is octanoyl-[ACP] + L-lysyl-[protein] = N(6)-octanoyl-L-lysyl-[protein] + holo-[ACP] + H(+). The protein operates within protein modification; protein lipoylation via endogenous pathway; protein N(6)-(lipoyl)lysine from octanoyl-[acyl-carrier-protein]: step 1/2. Catalyzes the transfer of endogenously produced octanoic acid from octanoyl-acyl-carrier-protein onto the lipoyl domains of lipoate-dependent enzymes. Lipoyl-ACP can also act as a substrate although octanoyl-ACP is likely to be the physiological substrate. The polypeptide is Octanoyltransferase (Shewanella sp. (strain W3-18-1)).